The following is a 368-amino-acid chain: Phosphoserine aminotransferase (368 aa).

Arginine 42 is an L-glutamate binding site. Pyridoxal 5'-phosphate contacts are provided by tryptophan 101, threonine 151, aspartate 175, and glutamine 198. Lysine 199 bears the N6-(pyridoxal phosphate)lysine mark. 240–241 (NT) provides a ligand contact to pyridoxal 5'-phosphate.

This sequence belongs to the class-V pyridoxal-phosphate-dependent aminotransferase family. SerC subfamily. As to quaternary structure, homodimer. The cofactor is pyridoxal 5'-phosphate.

It is found in the cytoplasm. It catalyses the reaction O-phospho-L-serine + 2-oxoglutarate = 3-phosphooxypyruvate + L-glutamate. It carries out the reaction 4-(phosphooxy)-L-threonine + 2-oxoglutarate = (R)-3-hydroxy-2-oxo-4-phosphooxybutanoate + L-glutamate. It functions in the pathway amino-acid biosynthesis; L-serine biosynthesis; L-serine from 3-phospho-D-glycerate: step 2/3. The protein operates within cofactor biosynthesis; pyridoxine 5'-phosphate biosynthesis; pyridoxine 5'-phosphate from D-erythrose 4-phosphate: step 3/5. Catalyzes the reversible conversion of 3-phosphohydroxypyruvate to phosphoserine and of 3-hydroxy-2-oxo-4-phosphonooxybutanoate to phosphohydroxythreonine. This Polaromonas sp. (strain JS666 / ATCC BAA-500) protein is Phosphoserine aminotransferase.